Reading from the N-terminus, the 94-residue chain is Co-chaperonin GroES (94 aa).

It belongs to the GroES chaperonin family. Heptamer of 7 subunits arranged in a ring. Interacts with the chaperonin GroEL.

It localises to the cytoplasm. Its function is as follows. Together with the chaperonin GroEL, plays an essential role in assisting protein folding. The GroEL-GroES system forms a nano-cage that allows encapsulation of the non-native substrate proteins and provides a physical environment optimized to promote and accelerate protein folding. GroES binds to the apical surface of the GroEL ring, thereby capping the opening of the GroEL channel. The polypeptide is Co-chaperonin GroES (Geobacillus sp. (strain WCH70)).